The following is a 132-amino-acid chain: Large ribosomal subunit protein uL14 (132 aa).

The protein belongs to the universal ribosomal protein uL14 family. The L3/L14/L24e cluster may contact the 16S rRNA in 2 intersubunit bridges. Part of the 50S ribosomal subunit. Forms a cluster with proteins L3 and L24e.

Forms part of two intersubunit bridges in the 70S ribosome. Binds to 23S rRNA. The chain is Large ribosomal subunit protein uL14 from Haloarcula marismortui (strain ATCC 43049 / DSM 3752 / JCM 8966 / VKM B-1809) (Halobacterium marismortui).